Consider the following 323-residue polypeptide: Mycothiol acetyltransferase (323 aa).

2 N-acetyltransferase domains span residues 5–145 and 168–323; these read LTTD…LPLR and VEIR…PEER. E36 contacts 1D-myo-inositol 2-(L-cysteinylamino)-2-deoxy-alpha-D-glucopyranoside. Residue 83 to 85 participates in acetyl-CoA binding; that stretch reads VAV. Residues E195, K236, and E252 each coordinate 1D-myo-inositol 2-(L-cysteinylamino)-2-deoxy-alpha-D-glucopyranoside. Acetyl-CoA-binding positions include 256–258 and 263–269; these read VGV and QGSGLGR. Residue Y290 participates in 1D-myo-inositol 2-(L-cysteinylamino)-2-deoxy-alpha-D-glucopyranoside binding. Residue 295–300 coordinates acetyl-CoA; that stretch reads NRPAVQ.

Belongs to the acetyltransferase family. MshD subfamily. Monomer.

It carries out the reaction 1D-myo-inositol 2-(L-cysteinylamino)-2-deoxy-alpha-D-glucopyranoside + acetyl-CoA = mycothiol + CoA + H(+). Its function is as follows. Catalyzes the transfer of acetyl from acetyl-CoA to desacetylmycothiol (Cys-GlcN-Ins) to form mycothiol. The protein is Mycothiol acetyltransferase of Thermobifida fusca (strain YX).